The sequence spans 291 residues: Shikimate dehydrogenase (NADP(+)) (291 aa).

Residues 22–24 (SLS) and T69 contribute to the shikimate site. The active-site Proton acceptor is the K73. Positions 94 and 110 each coordinate shikimate. NADP(+)-binding positions include 131 to 135 (GSGGA) and L226. Y228 serves as a coordination point for shikimate. G249 contributes to the NADP(+) binding site.

This sequence belongs to the shikimate dehydrogenase family. Homodimer.

It carries out the reaction shikimate + NADP(+) = 3-dehydroshikimate + NADPH + H(+). The protein operates within metabolic intermediate biosynthesis; chorismate biosynthesis; chorismate from D-erythrose 4-phosphate and phosphoenolpyruvate: step 4/7. Involved in the biosynthesis of the chorismate, which leads to the biosynthesis of aromatic amino acids. Catalyzes the reversible NADPH linked reduction of 3-dehydroshikimate (DHSA) to yield shikimate (SA). The protein is Shikimate dehydrogenase (NADP(+)) of Synechococcus sp. (strain JA-3-3Ab) (Cyanobacteria bacterium Yellowstone A-Prime).